The following is a 569-amino-acid chain: 3-(3-hydroxy-phenyl)propionate/3-hydroxycinnamic acid hydroxylase (569 aa).

FAD contacts are provided by residues 8–37 (DVVIVGAGPAGLTLANILGLEGVRVLVVDE) and 273–283 (FREGRLMLAGD).

It belongs to the PheA/TfdB FAD monooxygenase family. FAD is required as a cofactor.

It carries out the reaction 3-(3-hydroxyphenyl)propanoate + NADH + O2 + H(+) = 3-(2,3-dihydroxyphenyl)propanoate + NAD(+) + H2O. The catalysed reaction is (2E)-3-(3-hydroxyphenyl)prop-2-enoate + NADH + O2 + H(+) = (2E)-3-(2,3-dihydroxyphenyl)prop-2-enoate + NAD(+) + H2O. It functions in the pathway aromatic compound metabolism; 3-phenylpropanoate degradation. Catalyzes the insertion of one atom of molecular oxygen into position 2 of the phenyl ring of 3-(3-hydroxyphenyl)propionate (3-HPP) and hydroxycinnamic acid (3HCI). The protein is 3-(3-hydroxy-phenyl)propionate/3-hydroxycinnamic acid hydroxylase of Mycolicibacterium gilvum (strain PYR-GCK) (Mycobacterium gilvum (strain PYR-GCK)).